We begin with the raw amino-acid sequence, 401 residues long: Propionate kinase (401 aa).

ATP contacts are provided by N11 and K18. N11 is a binding site for Mg(2+). R86 contributes to the substrate binding site. The active-site Proton donor/acceptor is the D143. ATP is bound by residues H175, H203 to G207, D278 to R280, and G326 to N330.

Belongs to the acetokinase family. TdcD subfamily. As to quaternary structure, homodimer. The cofactor is Mg(2+).

The catalysed reaction is propanoate + ATP = propanoyl phosphate + ADP. The protein operates within amino-acid degradation; L-threonine degradation via propanoate pathway; propanoate from L-threonine: step 4/4. Its function is as follows. Catalyzes the conversion of propionyl phosphate and ADP to propionate and ATP. The protein is Propionate kinase of Klebsiella pneumoniae (strain 342).